Consider the following 189-residue polypeptide: Small ribosomal subunit protein uS7 (189 aa).

This sequence belongs to the universal ribosomal protein uS7 family. In terms of assembly, part of the 30S ribosomal subunit.

Functionally, one of the primary rRNA binding proteins, it binds directly to 16S rRNA where it nucleates assembly of the head domain of the 30S subunit. Is located at the subunit interface close to the decoding center. This chain is Small ribosomal subunit protein uS7, found in Methanosarcina acetivorans (strain ATCC 35395 / DSM 2834 / JCM 12185 / C2A).